The primary structure comprises 299 residues: Mitochondrial magnesium exporter 1 (299 aa).

3 Solcar repeats span residues 12–103, 112–200, and 210–296; these read SNPV…GKRL, LTYP…LQEL, and ISTT…TNDL. A run of 4 helical transmembrane segments spans residues 79–99, 114–134, 216–236, and 272–292; these read ISAPLVGVTPIYAVDFAVYAA, YPQIFAAGALAGVCSALVTVP, ILSGGTAGIVFWTLAVPFDVL, and ILPILLRAFPSTAAVFFGVEL.

Belongs to the mitochondrial carrier (TC 2.A.29) family.

It is found in the mitochondrion membrane. Mediates efflux of magnesium ions from mitochondria, suggesting a role in magnesium homeostasis. The chain is Mitochondrial magnesium exporter 1 from Drosophila melanogaster (Fruit fly).